Consider the following 156-residue polypeptide: 3-dehydroquinate dehydratase 1 (156 aa).

Tyr-32 acts as the Proton acceptor in catalysis. The substrate site is built by Asn-84, His-90, and Asp-97. The active-site Proton donor is the His-110. Substrate contacts are provided by residues 111–112 (LS) and Arg-121.

This sequence belongs to the type-II 3-dehydroquinase family. Homododecamer.

It carries out the reaction 3-dehydroquinate = 3-dehydroshikimate + H2O. It participates in metabolic intermediate biosynthesis; chorismate biosynthesis; chorismate from D-erythrose 4-phosphate and phosphoenolpyruvate: step 3/7. Its function is as follows. Catalyzes a trans-dehydration via an enolate intermediate. This chain is 3-dehydroquinate dehydratase 1 (aroQ1), found in Ralstonia nicotianae (strain ATCC BAA-1114 / GMI1000) (Ralstonia solanacearum).